We begin with the raw amino-acid sequence, 389 residues long: tRNA-specific 2-thiouridylase MnmA (389 aa).

Residues 35 to 42 (GMSGGVDS) and methionine 61 each bind ATP. An interaction with target base in tRNA region spans residues 121–123 (NPD). Catalysis depends on cysteine 126, which acts as the Nucleophile. Residues cysteine 126 and cysteine 223 are joined by a disulfide bond. Glycine 151 contributes to the ATP binding site. The tract at residues 173 to 175 (KDQ) is interaction with tRNA. Cysteine 223 serves as the catalytic Cysteine persulfide intermediate. The interval 335–336 (RY) is interaction with tRNA.

Belongs to the MnmA/TRMU family.

Its subcellular location is the cytoplasm. It carries out the reaction S-sulfanyl-L-cysteinyl-[protein] + uridine(34) in tRNA + AH2 + ATP = 2-thiouridine(34) in tRNA + L-cysteinyl-[protein] + A + AMP + diphosphate + H(+). Catalyzes the 2-thiolation of uridine at the wobble position (U34) of tRNA, leading to the formation of s(2)U34. The polypeptide is tRNA-specific 2-thiouridylase MnmA (Actinobacillus succinogenes (strain ATCC 55618 / DSM 22257 / CCUG 43843 / 130Z)).